The chain runs to 129 residues: Lysozyme C-1/C-2 (129 aa).

The C-type lysozyme domain occupies 1 to 129; that stretch reads KVFERCELAR…VSSYVEGCTL (129 aa). Intrachain disulfides connect C6–C127, C30–C115, C65–C81, and C77–C95. Active-site residues include E35 and D53.

It belongs to the glycosyl hydrolase 22 family. In terms of assembly, monomer.

The catalysed reaction is Hydrolysis of (1-&gt;4)-beta-linkages between N-acetylmuramic acid and N-acetyl-D-glucosamine residues in a peptidoglycan and between N-acetyl-D-glucosamine residues in chitodextrins.. In terms of biological role, lysozymes have primarily a bacteriolytic function; those in tissues and body fluids are associated with the monocyte-macrophage system and enhance the activity of immunoagents. The sequence is that of Lysozyme C-1/C-2 from Axis axis (Axis deer).